The chain runs to 167 residues: Glutathione peroxidase-like peroxiredoxin 1 (167 aa).

Cys36 functions as the Cysteine sulfenic acid (-SOH) intermediate in the catalytic mechanism. Cysteines 36 and 82 form a disulfide.

Belongs to the glutathione peroxidase family. As to quaternary structure, monomer.

Its subcellular location is the peroxisome matrix. The protein localises to the mitochondrion outer membrane. It catalyses the reaction 2 glutathione + H2O2 = glutathione disulfide + 2 H2O. The enzyme catalyses a hydroperoxide + [thioredoxin]-dithiol = an alcohol + [thioredoxin]-disulfide + H2O. In terms of biological role, glutathione peroxidase-like protein that protects cells from phospholipid hydroperoxides and nonphospholipid peroxides during oxidative stress. Has peroxidase activity using thioredoxin or glutathione as a reducing power. Involved in peroxisome formation. The chain is Glutathione peroxidase-like peroxiredoxin 1 from Saccharomyces cerevisiae (strain ATCC 204508 / S288c) (Baker's yeast).